The sequence spans 915 residues: Metabotropic glutamate receptor 7 (915 aa).

Positions 1–34 (MVQLGKLLRVLTLMKFPCCVLEVLLCVLAAAARG) are cleaved as a signal peptide. The Extracellular portion of the chain corresponds to 35–590 (QEMYAPHSIR…IIKLEWHSPW (556 aa)). An intrachain disulfide couples cysteine 67 to cysteine 109. N-linked (GlcNAc...) asparagine glycosylation is present at asparagine 98. L-glutamate-binding positions include serine 159, 180–182 (AST), tyrosine 230, and aspartate 314. Disulfide bonds link cysteine 249/cysteine 541, cysteine 374/cysteine 390, cysteine 430/cysteine 437, cysteine 523/cysteine 542, cysteine 527/cysteine 545, cysteine 548/cysteine 560, and cysteine 563/cysteine 576. Lysine 407 contacts L-glutamate. N-linked (GlcNAc...) asparagine glycans are attached at residues asparagine 458 and asparagine 486. N-linked (GlcNAc...) asparagine glycosylation is present at asparagine 572. A helical transmembrane segment spans residues 591-615 (AVIPVFLAMLGIIATIFVMATFIRY). Over 616-627 (NDTPIVRASGRE) the chain is Cytoplasmic. Residues 628 to 648 (LSYVLLTGIFLCYIITFLMIA) traverse the membrane as a helical segment. At 649–654 (KPDVAV) the chain is on the extracellular side. The helical transmembrane segment at 655–675 (CSFRRVFLGLGMCISYAALLT) threads the bilayer. Topologically, residues 676 to 702 (KTNRIYRIFEQGKKSVTAPRLISPTSQ) are cytoplasmic. A helical membrane pass occupies residues 703–723 (LAITSSLISVQLLGVFIWFGV). Residues 724–753 (DPPNIIIDYDEHKTMNPEQARGVLKCDITD) lie on the Extracellular side of the membrane. The chain crosses the membrane as a helical span at residues 754–775 (LQIICSLGYSILLMVTCTVYAI). Topologically, residues 776-788 (KTRGVPENFNEAK) are cytoplasmic. A helical transmembrane segment spans residues 789–810 (PIGFTMYTTCIVWLAFIPIFFG). The Extracellular segment spans residues 811-825 (TAQSAEKLYIQTTTL). The chain crosses the membrane as a helical span at residues 826 to 850 (TISMNLSASVALGMLYMPKVYIIIF). Over 851 to 915 (HPELNVQKRK…KYVSYNNLVI (65 aa)) the chain is Cytoplasmic. Residues 874–895 (SRLSHKPSDRPNGEAKTELCEN) form a disordered region. Residues 879–892 (KPSDRPNGEAKTEL) show a composition bias toward basic and acidic residues. Serine 900 carries the post-translational modification Phosphoserine.

Belongs to the G-protein coupled receptor 3 family. As to quaternary structure, homodimer. Interacts with PICK1. Widely distributed throughout the brain.

Its subcellular location is the cell membrane. In terms of biological role, G-protein coupled receptor activated by glutamate that regulates axon outgrowth through the MAPK-cAMP-PKA signaling pathway during neuronal development. Ligand binding causes a conformation change that triggers signaling via guanine nucleotide-binding proteins (G proteins) and modulates the activity of downstream effectors, such as adenylate cyclase that it inhibits. The chain is Metabotropic glutamate receptor 7 (Grm7) from Rattus norvegicus (Rat).